Reading from the N-terminus, the 115-residue chain is Protein Diedel (115 aa).

Positions 1-24 are cleaved as a signal peptide; the sequence is MASPVVSLLLVGICALAFVHVARS. 5 cysteine pairs are disulfide-bonded: cysteine 26–cysteine 81, cysteine 27–cysteine 87, cysteine 42–cysteine 55, cysteine 60–cysteine 71, and cysteine 76–cysteine 83.

The protein belongs to the Diedel family. As to expression, detected in hemolymph (at protein level). Also expressed in the fat body and is probably synthesized in the fat body and secreted into the hemolymph.

It is found in the secreted. Cytokine which promotes survival following infection by Sindbis virus by suppressing the immune deficiency pathway. Following infection by the enteropathogenic bacteria E.carotovora limits intestinal stem cells proliferation. When secreted from muscle or adipose tissue, can attenuate age-related intestinal tissue degeneration by inhibiting apoptosis. The sequence is that of Protein Diedel from Drosophila melanogaster (Fruit fly).